Reading from the N-terminus, the 284-residue chain is L-ribulose-5-phosphate 3-epimerase UlaE (284 aa).

The protein belongs to the L-ribulose-5-phosphate 3-epimerase family.

The catalysed reaction is L-ribulose 5-phosphate = L-xylulose 5-phosphate. Its pathway is cofactor degradation; L-ascorbate degradation; D-xylulose 5-phosphate from L-ascorbate: step 3/4. Catalyzes the isomerization of L-xylulose-5-phosphate to L-ribulose-5-phosphate. Is involved in the anaerobic L-ascorbate utilization. This chain is L-ribulose-5-phosphate 3-epimerase UlaE, found in Shigella boydii serotype 18 (strain CDC 3083-94 / BS512).